Consider the following 203-residue polypeptide: Holliday junction branch migration complex subunit RuvA (203 aa).

The interval 1–63 (MIDYLRGTLT…EDVIRLYGFR (63 aa)) is domain I. Residues 64–142 (TKEKRSLFEK…ELHPGLFSQK (79 aa)) form a domain II region. Positions 143–152 (EEQPKPHEKN) are flexible linker. The tract at residues 153–203 (DGNQALDEAMEALKALGYVEKELKKVKPKLEQETLTTDAYIKKALQLMLNR) is domain III.

This sequence belongs to the RuvA family. In terms of assembly, homotetramer. Forms an RuvA(8)-RuvB(12)-Holliday junction (HJ) complex. HJ DNA is sandwiched between 2 RuvA tetramers; dsDNA enters through RuvA and exits via RuvB. An RuvB hexamer assembles on each DNA strand where it exits the tetramer. Each RuvB hexamer is contacted by two RuvA subunits (via domain III) on 2 adjacent RuvB subunits; this complex drives branch migration. In the full resolvosome a probable DNA-RuvA(4)-RuvB(12)-RuvC(2) complex forms which resolves the HJ.

Its subcellular location is the cytoplasm. The RuvA-RuvB-RuvC complex processes Holliday junction (HJ) DNA during genetic recombination and DNA repair, while the RuvA-RuvB complex plays an important role in the rescue of blocked DNA replication forks via replication fork reversal (RFR). RuvA specifically binds to HJ cruciform DNA, conferring on it an open structure. The RuvB hexamer acts as an ATP-dependent pump, pulling dsDNA into and through the RuvAB complex. HJ branch migration allows RuvC to scan DNA until it finds its consensus sequence, where it cleaves and resolves the cruciform DNA. The sequence is that of Holliday junction branch migration complex subunit RuvA from Halalkalibacterium halodurans (strain ATCC BAA-125 / DSM 18197 / FERM 7344 / JCM 9153 / C-125) (Bacillus halodurans).